The following is a 154-amino-acid chain: Endoribonuclease YbeY (154 aa).

The Zn(2+) site is built by histidine 114, histidine 118, and histidine 124.

Belongs to the endoribonuclease YbeY family. It depends on Zn(2+) as a cofactor.

It localises to the cytoplasm. Its function is as follows. Single strand-specific metallo-endoribonuclease involved in late-stage 70S ribosome quality control and in maturation of the 3' terminus of the 16S rRNA. The sequence is that of Endoribonuclease YbeY from Histophilus somni (strain 129Pt) (Haemophilus somnus).